A 438-amino-acid polypeptide reads, in one-letter code: Chromosomal replication initiator protein DnaA (438 aa).

Positions 1 to 71 (MTTKEFLTII…CFEIYDGSKP (71 aa)) are domain I, interacts with DnaA modulators. Positions 71 to 100 (PTIEIKLSNEKKSKKEILKEQTQNESTEST) are domain II. Positions 101 to 315 (ILNPSYTFDS…GVLIRINASA (215 aa)) are domain III, AAA+ region. Residues glycine 145, glycine 147, lysine 148, and threonine 149 each coordinate ATP. The domain IV, binds dsDNA stretch occupies residues 316-438 (SLLNQEITLP…LKNKIINSRE (123 aa)).

The protein belongs to the DnaA family. In terms of assembly, oligomerizes as a right-handed, spiral filament on DNA at oriC.

The protein localises to the cytoplasm. Functionally, plays an essential role in the initiation and regulation of chromosomal replication. ATP-DnaA binds to the origin of replication (oriC) to initiate formation of the DNA replication initiation complex once per cell cycle. Binds the DnaA box (a 9 base pair repeat at the origin) and separates the double-stranded (ds)DNA. Forms a right-handed helical filament on oriC DNA; dsDNA binds to the exterior of the filament while single-stranded (ss)DNA is stabiized in the filament's interior. The ATP-DnaA-oriC complex binds and stabilizes one strand of the AT-rich DNA unwinding element (DUE), permitting loading of DNA polymerase. After initiation quickly degrades to an ADP-DnaA complex that is not apt for DNA replication. Binds acidic phospholipids. The sequence is that of Chromosomal replication initiator protein DnaA from Aliarcobacter butzleri (strain RM4018) (Arcobacter butzleri).